The chain runs to 448 residues: Tubulin alpha chain (448 aa).

GTP-binding residues include Gln12, Glu73, Ser142, Gly146, Thr147, Thr181, Asn208, and Asn230. Residue Glu73 participates in Mg(2+) binding. Glu256 is an active-site residue.

The protein belongs to the tubulin family. As to quaternary structure, dimer of alpha and beta chains. A typical microtubule is a hollow water-filled tube with an outer diameter of 25 nm and an inner diameter of 15 nM. Alpha-beta heterodimers associate head-to-tail to form protofilaments running lengthwise along the microtubule wall with the beta-tubulin subunit facing the microtubule plus end conferring a structural polarity. Microtubules usually have 13 protofilaments but different protofilament numbers can be found in some organisms and specialized cells. Mg(2+) is required as a cofactor.

It localises to the cytoplasm. It is found in the cytoskeleton. It carries out the reaction GTP + H2O = GDP + phosphate + H(+). Functionally, tubulin is the major constituent of microtubules, a cylinder consisting of laterally associated linear protofilaments composed of alpha- and beta-tubulin heterodimers. Microtubules grow by the addition of GTP-tubulin dimers to the microtubule end, where a stabilizing cap forms. Below the cap, tubulin dimers are in GDP-bound state, owing to GTPase activity of alpha-tubulin. This is Tubulin alpha chain (TUB1) from Eremothecium gossypii (strain ATCC 10895 / CBS 109.51 / FGSC 9923 / NRRL Y-1056) (Yeast).